The chain runs to 463 residues: MSYPGYPPTGYPPFPGYPPTGQESSFPPPGQYPYPSGFPPMGGGAYPPAPSSGYPGAGGYPAPGGYPAPGGYPGAPQPGGAPSYPGGQGFGAPPGGAGFPGYPQPPTQSYGGGPAQVPLPGGFPGGAMPSQYPGGQSPYPSQPAPMTQGTHGTIRPAANFDAMRDAEVLRKAMKGFGTDEQAIIDVVANRSNDQRQKIKAAFKTMYGKDLIKDLKSELSGNMEELILALFMPSTYYDAWSLRNAMKGAGTQERVLIEILCTRTNQEIREIVRCYQSEFGRDLEKDIRSDTSGHFERLLVSMCQGNRDENQNVNHQLAQEDAQRLYQAGEGRLGTDESCFNMILATRSFPQLKATMEAYSRMANRDLLNSVSREFSGNVESGLKTILQCALNRPAFFAERLYYSMKGAGTDDSTLVRIVVTRSEIDLVQIKQMFSQMYQKTLGTMIASDTSGDYRKLLLAIVGQ.

Composition is skewed to pro residues over residues 1–18 (MSYPGYPPTGYPPFPGYP) and 26–38 (FPPPGQYPYPSGF). Disordered regions lie at residues 1–54 (MSYP…SSGY) and 71–153 (GYPG…THGT). The segment at 1–140 (MSYPGYPPTG…QYPGGQSPYP (140 aa)) is repeat-rich region. The interval 5–20 (GYPPTGYPPFPGYPPT) is 3 X 5 AA tandem repeats of G-Y-P-P-X. Residues 86-99 (GGQGFGAPPGGAGF) are compositionally biased toward gly residues. 4 Annexin repeats span residues 160-231 (FDAM…ALFM), 232-303 (PSTY…SMCQ), 315-387 (QLAQ…TILQ), and 391-462 (NRPA…AIVG). An N6-acetyllysine modification is found at lysine 208.

The protein belongs to the annexin family. As to quaternary structure, interacts with PDCD6.

Calcium/phospholipid-binding protein which promotes membrane fusion and is involved in exocytosis. The sequence is that of Annexin A7 (ANXA7) from Bos taurus (Bovine).